The primary structure comprises 453 residues: Phosphoglucosamine mutase (453 aa).

Ser-109 functions as the Phosphoserine intermediate in the catalytic mechanism. Mg(2+) is bound by residues Ser-109, Asp-246, Asp-248, and Asp-250. At Ser-109 the chain carries Phosphoserine.

It belongs to the phosphohexose mutase family. The cofactor is Mg(2+). Activated by phosphorylation.

It catalyses the reaction alpha-D-glucosamine 1-phosphate = D-glucosamine 6-phosphate. Functionally, catalyzes the conversion of glucosamine-6-phosphate to glucosamine-1-phosphate. The chain is Phosphoglucosamine mutase from Leifsonia xyli subsp. xyli (strain CTCB07).